We begin with the raw amino-acid sequence, 384 residues long: Alpha-2B adrenergic receptor (384 aa).

The helical transmembrane segment at A1–L25 threads the bilayer. The Cytoplasmic segment spans residues T26–L36. The chain crosses the membrane as a helical span at residues F37–L62. The Extracellular portion of the chain corresponds to G63–C72. C72 and C151 are joined by a disulfide. Residues E73 to L95 traverse the membrane as a helical segment. At D96 to K117 the chain is on the cytoplasmic side. The helical transmembrane segment at C118–D140 threads the bilayer. At Q141–E156 the chain is on the extracellular side. The chain crosses the membrane as a helical span at residues A157 to L180. Over R181–V348 the chain is Cytoplasmic. Residues R192 to P289 are disordered. Residues L218–A229 are compositionally biased toward polar residues. Residues P240 to P249 are compositionally biased toward basic and acidic residues. A helical membrane pass occupies residues L349–I372. Residues C373 to H381 are Extracellular-facing. Residues G382–F384 form a helical membrane-spanning segment.

Belongs to the G-protein coupled receptor 1 family. Adrenergic receptor subfamily. ADRA2B sub-subfamily. As to quaternary structure, interacts with RAB26. Interacts with PPP1R9B. Interacts with GGA1, GGA2 and GGA3.

It localises to the cell membrane. Alpha-2 adrenergic receptors mediate the catecholamine-induced inhibition of adenylate cyclase through the action of G proteins. This Elephas maximus (Indian elephant) protein is Alpha-2B adrenergic receptor (ADRA2B).